We begin with the raw amino-acid sequence, 421 residues long: Gamma-glutamyl phosphate reductase (421 aa).

Belongs to the gamma-glutamyl phosphate reductase family.

Its subcellular location is the cytoplasm. It catalyses the reaction L-glutamate 5-semialdehyde + phosphate + NADP(+) = L-glutamyl 5-phosphate + NADPH + H(+). It participates in amino-acid biosynthesis; L-proline biosynthesis; L-glutamate 5-semialdehyde from L-glutamate: step 2/2. Functionally, catalyzes the NADPH-dependent reduction of L-glutamate 5-phosphate into L-glutamate 5-semialdehyde and phosphate. The product spontaneously undergoes cyclization to form 1-pyrroline-5-carboxylate. The protein is Gamma-glutamyl phosphate reductase of Nocardia farcinica (strain IFM 10152).